A 406-amino-acid polypeptide reads, in one-letter code: Tryptophan 2,3-dioxygenase (406 aa).

Residues 72–76 (FIITH) and R144 contribute to the substrate site. H328 contributes to the heme binding site. Position 342 (T342) interacts with substrate.

Belongs to the tryptophan 2,3-dioxygenase family. As to quaternary structure, homotetramer. Dimer of dimers. It depends on heme as a cofactor.

The enzyme catalyses L-tryptophan + O2 = N-formyl-L-kynurenine. The protein operates within amino-acid degradation; L-tryptophan degradation via kynurenine pathway; L-kynurenine from L-tryptophan: step 1/2. Its function is as follows. Heme-dependent dioxygenase that catalyzes the oxidative cleavage of the L-tryptophan (L-Trp) pyrrole ring and converts L-tryptophan to N-formyl-L-kynurenine. Catalyzes the oxidative cleavage of the indole moiety. This chain is Tryptophan 2,3-dioxygenase, found in Homo sapiens (Human).